The primary structure comprises 123 residues: Ribosome-binding factor A (123 aa).

This sequence belongs to the RbfA family. As to quaternary structure, monomer. Binds 30S ribosomal subunits, but not 50S ribosomal subunits or 70S ribosomes.

It is found in the cytoplasm. One of several proteins that assist in the late maturation steps of the functional core of the 30S ribosomal subunit. Associates with free 30S ribosomal subunits (but not with 30S subunits that are part of 70S ribosomes or polysomes). Required for efficient processing of 16S rRNA. May interact with the 5'-terminal helix region of 16S rRNA. This is Ribosome-binding factor A from Neisseria meningitidis serogroup B (strain ATCC BAA-335 / MC58).